Here is a 425-residue protein sequence, read N- to C-terminus: MNAMLETPELPAVFDGVKLAAVAAVLYVIVRCLNLKSPTAPPDLYFQDSGLSRFLLKSCPLLTKEYIPPLIWGKSGHIQTALYGKMGRVRSPHPYGHRKFITMSDGATSTFDLFEPLAEHCVGDDITMVICPGIANHSEKQYIRTFVDYAQKNGYRCAVLNHLGALPNIELTSPRMFTYGCTWEFGAMVNYIKKTYPLTQLVVVGFSLGGNIVCKYLGETQANQEKVLCCVSVCQGYSALRAQETFMQWDQCRRFYNFLMADNMKKIILSHRQALFGDHVKKPQSLEDTDLSRLYTATSLMQIDDNVMRKFHGYNSLKEYYEEESCMRYLHRIYVPLMLVNAADDPLVHESLLTIPKSLSEKRENVMFVLPLHGGHLGFFEGSVLFPEPLTWMDKLVVEYANAICQWERNKLQCSDTEQVEADLE.

Residues 1–9 (MNAMLETPE) are Cytoplasmic-facing. Residues 10–30 (LPAVFDGVKLAAVAAVLYVIV) traverse the membrane as a helical; Signal-anchor for type II membrane protein segment. At 31 to 425 (RCLNLKSPTA…DTEQVEADLE (395 aa)) the chain is on the extracellular side. The AB hydrolase-1 domain maps to 128-382 (MVICPGIANH…HGGHLGFFEG (255 aa)). Asn136 carries N-linked (GlcNAc...) asparagine glycosylation. Catalysis depends on Ser207, which acts as the Nucleophile. Residues Asp345 and His376 each act as charge relay system in the active site.

The protein belongs to the AB hydrolase superfamily. AB hydrolase 4 family. Present in sperm (at protein level).

The protein localises to the cell projection. Its subcellular location is the cilium. It localises to the flagellum membrane. It is found in the cell membrane. The catalysed reaction is an acetyl ester + H2O = an aliphatic alcohol + acetate + H(+). It catalyses the reaction Hydrolyzes glycerol monoesters of long-chain fatty acids.. The enzyme catalyses a triacylglycerol + H2O = a diacylglycerol + a fatty acid + H(+). It carries out the reaction 2-(5Z,8Z,11Z,14Z-eicosatetraenoyl)-glycerol + H2O = glycerol + (5Z,8Z,11Z,14Z)-eicosatetraenoate + H(+). The catalysed reaction is a butanoate ester + H2O = an aliphatic alcohol + butanoate + H(+). It catalyses the reaction hexadecanoate ester + H2O = an aliphatic alcohol + hexadecanoate + H(+). Acylglycerol lipase activity is activated upon binding to progesterone. Functionally, progesterone-dependent acylglycerol lipase that catalyzes hydrolysis of endocannabinoid arachidonoylglycerol (AG) from cell membrane. Acts as a progesterone receptor: progesterone-binding activates the acylglycerol lipase activity, mediating degradation of 1-arachidonoylglycerol (1AG) and 2-arachidonoylglycerol (2AG) to glycerol and arachidonic acid (AA). Also displays an ester hydrolase activity against acetyl ester, butanoate ester and hexadecanoate ester. Plays a key role in sperm capacitation in response to progesterone by mediating degradation of 2AG, an inhibitor of the sperm calcium channel CatSper, leading to calcium influx via CatSper and sperm activation. May also play a role in smooth muscle cells migration. This chain is Monoacylglycerol lipase ABHD2, found in Homo sapiens (Human).